Reading from the N-terminus, the 260-residue chain is Alpha- and beta-fibrinogenase OhS1 (260 aa).

The signal sequence occupies residues 1-18; sequence MALIRVLASLLILQLSYA. The propeptide occupies 19–24; that stretch reads VTPFDR. In terms of domain architecture, Peptidase S1 spans 25–248; sequence IIGGFECNEY…YIDWIEGIIA (224 aa). 6 cysteine pairs are disulfide-bonded: cysteine 31-cysteine 163, cysteine 50-cysteine 66, cysteine 98-cysteine 255, cysteine 142-cysteine 209, cysteine 174-cysteine 188, and cysteine 199-cysteine 224. Residue asparagine 44 is glycosylated (N-linked (GlcNAc...) asparagine). Histidine 65 functions as the Charge relay system in the catalytic mechanism. Asparagine 79 is a glycosylation site (N-linked (GlcNAc...) asparagine). Residue aspartate 110 is the Charge relay system of the active site. N-linked (GlcNAc...) asparagine glycosylation is found at asparagine 117 and asparagine 121. Serine 203 acts as the Charge relay system in catalysis. N-linked (GlcNAc...) asparagine glycosylation is present at asparagine 250.

Belongs to the peptidase S1 family. Snake venom subfamily. In terms of assembly, monomer. As to expression, expressed by the venom gland.

The protein resides in the secreted. Completely inhibited by NPGB, PMSF, diisopropylfluorophosphate (DFP), benzamidine and soybean trypsin inhibitor. Not inhibited by EDTA. Its function is as follows. Snake venom serine protease that possesses potent fibrinogenolytic (on both alpha- (FGA) and beta-chains (FGB)) and amidolytic activities. Selectively cleaves Arg-|-Xaa or Lys-|-Xaa bonds. The sequence is that of Alpha- and beta-fibrinogenase OhS1 from Ophiophagus hannah (King cobra).